A 323-amino-acid chain; its full sequence is Beta-ketoacyl-[acyl-carrier-protein] synthase III (323 aa).

Residues Cys113 and His250 contribute to the active site. The ACP-binding stretch occupies residues 251-255 (QANRR). Residue Asn280 is part of the active site.

Belongs to the thiolase-like superfamily. FabH family. As to quaternary structure, homodimer.

It localises to the cytoplasm. The catalysed reaction is malonyl-[ACP] + acetyl-CoA + H(+) = 3-oxobutanoyl-[ACP] + CO2 + CoA. It participates in lipid metabolism; fatty acid biosynthesis. In terms of biological role, catalyzes the condensation reaction of fatty acid synthesis by the addition to an acyl acceptor of two carbons from malonyl-ACP. Catalyzes the first condensation reaction which initiates fatty acid synthesis and may therefore play a role in governing the total rate of fatty acid production. Possesses both acetoacetyl-ACP synthase and acetyl transacylase activities. Its substrate specificity determines the biosynthesis of branched-chain and/or straight-chain of fatty acids. The chain is Beta-ketoacyl-[acyl-carrier-protein] synthase III from Rhizobium rhizogenes (strain K84 / ATCC BAA-868) (Agrobacterium radiobacter).